The sequence spans 197 residues: Lymphotoxin-alpha (197 aa).

The first 26 residues, 1–26 (MTPPGRLYLPLLLGLLLAPPPPGAQG), serve as a signal peptide directing secretion. The THD domain maps to 55–197 (PAAHLVGDPS…SSVFFGAFAL (143 aa)). An N-linked (GlcNAc...) asparagine glycan is attached at Asn-88. A disulfide bridge connects residues Cys-112 and Cys-148.

It belongs to the tumor necrosis factor family. Homotrimer, and heterotrimer of either two LTB and one LTA subunits or (less prevalent) two LTA and one LTB subunits. Interacts with TNFRSF14.

It is found in the secreted. Its subcellular location is the membrane. Functionally, cytokine that in its homotrimeric form binds to TNFRSF1A/TNFR1, TNFRSF1B/TNFBR and TNFRSF14/HVEM. In its heterotrimeric form with LTB binds to TNFRSF3/LTBR. Lymphotoxin is produced by lymphocytes and is cytotoxic for a wide range of tumor cells in vitro and in vivo. The protein is Lymphotoxin-alpha (LTA) of Oryctolagus cuniculus (Rabbit).